The chain runs to 187 residues: LSM complex subunit LSM4 (187 aa).

The 84-residue stretch at 2–85 (LPLYLLTNAK…IKFIKLQDNI (84 aa)) folds into the Sm domain. The tract at residues 93–187 (INSNNNSNSN…NSSSPQKVEF (95 aa)) is disordered. Residues 112-167 (NRDSNNNRGNYNRRNNNNGNSNRRPYSQNRQYNNSNSSNINNSINSINSNNQNMNN) show a composition bias toward low complexity. At Arg119 the chain carries Omega-N-methylarginine. A compositionally biased stretch (polar residues) spans 175 to 187 (HHFNSSSPQKVEF). Ser181 bears the Phosphoserine mark.

This sequence belongs to the snRNP Sm proteins family. As to quaternary structure, component of the heptameric LSM1-LSM7 complex that forms a seven-membered ring structure with a donut shape. The LSm subunits are arranged in the order LSM1, LSM2, LSM3, LSM6, LSM5, LSM7 and LSM4. Except for LSM1, where a C-terminal helix crosses the ring structure to form additional interactions with LSM3 and LSM6, each subunit interacts only with its two neighboring subunits. The LSM1-LSM7 complex interacts with PAT1; within the complex PAT1 has direct interactions with LSM2 and LSM3. The LSM1-LSM7 complex interacts with XRN1. Component of the heptameric LSM2-LSM8 complex that forms a seven-membered ring structure with a donut shape; an RNA strand can pass through the hole in the center of the ring structure. The LSm subunits are arranged in the order LSM8, LSM2, LSM3, LSM6, LSM5, LSM7 and LSM4. Component of the spliceosome U4/U6-U5 tri-snRNP complex composed of the U4, U6 and U5 snRNAs and at least PRP3, PRP4, PRP6, PRP8, PRP18, PRP31, PRP38, SNU13, SNU23, SNU66, SNU114, SPP381, SMB1, SMD1, SMD2, SMD3, SMX2, SMX3, LSM2, LSM3, LSM4, LSM5, LSM6, LSM7, LSM8, BRR2 and DIB1. May be found in a complex comprising LSM2-LSM7 without LSM1 or LSM8; the complex associates with pre-P RNA and snoRNA SNR5.

It is found in the nucleus. Its subcellular location is the cytoplasm. Its function is as follows. Component of LSm protein complexes, which are involved in RNA processing and may function in a chaperone-like manner. Component of the cytoplasmic LSM1-LSM7 complex which is involved in mRNA degradation by activating the decapping step. Together with PAT1, the LSM1-LSM7 complex binds to osmotic stress-activated mRNAs to attenuate the osmotic stress response, probably by limiting ribosome access to the mRNA and consequently translation. Component of the nuclear LSM2-LSM8 complex, which is involved in spliceosome assembly. The LSM2-LSM8 complex plays a role in the biogenesis of the spliceosomal U4/U6-U5 tri-snRNP complex by accelerating PRP24-mediated annealing of U4/U6 di-snRNA. The LSM2-LSM8 complex binds U6 snRNA terminating with a non-cyclic 3' phosphate group. LSM2-LSM8 is probably also involved in degradation of nuclear pre-mRNA by targeting them for decapping. LSM2-LSM8 could be involved in processing of pre-tRNAs, pre-rRNAs and U3 snoRNA, although involvement may be indirect. In a complex that probably contains LSM2-LSM7, but not LSM1 or LSM8, associates with the precursor of the RNA component of RNase P (pre-P RNA) and may be involved in maturing pre-P RNA; the complex also associates with snoRNA SNR5. This chain is LSM complex subunit LSM4, found in Saccharomyces cerevisiae (strain ATCC 204508 / S288c) (Baker's yeast).